An 808-amino-acid chain; its full sequence is Putative dimethyl sulfoxide reductase chain YnfE (808 aa).

Residues 1-43 (MSKNERMVGISRRTLVKSTAIGSLALAAGGFSLPFTLRNAAAA) constitute a signal peptide (tat-type signal). In terms of domain architecture, 4Fe-4S Mo/W bis-MGD-type spans 49–110 (EKVVWGACSV…SIRRRINHPD (62 aa)). [4Fe-4S] cluster-binding residues include C56, C60, C64, and C96. S196 serves as a coordination point for Mo-bis(molybdopterin guanine dinucleotide).

Belongs to the prokaryotic molybdopterin-containing oxidoreductase family. Requires [4Fe-4S] cluster as cofactor. It depends on Mo-bis(molybdopterin guanine dinucleotide) as a cofactor. In terms of processing, exported by the Tat system. The position of the signal peptide cleavage has not been experimentally proven.

It is found in the cell membrane. Terminal reductase during anaerobic growth on various sulfoxide and N-oxide compounds. The protein is Putative dimethyl sulfoxide reductase chain YnfE (ynfE) of Escherichia coli (strain K12).